Reading from the N-terminus, the 321-residue chain is Leucine-rich repeat-containing protein 46 (321 aa).

LRR repeat units lie at residues 45 to 66 (ELQTVRLDREGITTIRNLEGLK), 67 to 88 (NLHSLYLQGNKIQQIENLACVP), 89 to 110 (SLRFLSLAGNQIRQVENLLDLP), and 111 to 132 (CLQFLDLSENLIETLKLDEFPQ). The LRRCT domain occupies 142 to 184 (NSCTNQDSYRELVIEALPLLLDLDGQPVMERWISDEEDEASSE). 2 positions are modified to phosphoserine: S175 and S182. A coiled-coil region spans residues 198–222 (RGFLKELEQELSRHREHRQQAALTQ). The segment at 235–321 (NLPLLPGVPM…TKTMAKRSKK (87 aa)) is disordered.

The protein resides in the cell projection. It is found in the cilium. The protein localises to the flagellum. In terms of biological role, required for normal spermatogenesis and male fertility. Plays an important role in sperm flagellum biogenesis. This chain is Leucine-rich repeat-containing protein 46 (LRRC46), found in Macaca fascicularis (Crab-eating macaque).